The following is a 1338-amino-acid chain: Insulin receptor substrate 2 (1338 aa).

Residues 1–12 show a composition bias toward pro residues; it reads MASPPRHGPPGP. Disordered regions lie at residues 1-31 and 49-72; these read MASP…NHSV and VLRG…QPPR. One can recognise a PH domain in the interval 16–144; that stretch reads DGPNLNNNNN…WYRALTDLVS (129 aa). Over residues 19-28 the composition is skewed to low complexity; that stretch reads NLNNNNNNNN. Residues 53–66 show a composition bias toward gly residues; sequence PGAGGDEATAGGGS. The IRS-type PTB domain maps to 194–298; sequence YREVWQVNLK…EAMKALKELF (105 aa). The segment at 303-411 is disordered; sequence RSKSQSSGSS…SHTLSGGCGG (109 aa). Phosphoserine occurs at positions 306 and 346. The residue at position 350 (Thr350) is a Phosphothreonine. Residues Ser365, Ser384, Ser388, and Ser391 each carry the phosphoserine modification. Arg412 is subject to Omega-N-methylarginine. Residues 428–537 are disordered; it reads SRSMSMPVAH…PPARDGGGGG (110 aa). The segment covering 444–453 has biased composition (low complexity); that stretch reads SPGSLSSSSG. A compositionally biased stretch (pro residues) spans 459-471; that stretch reads YPPPPGPHPPLPH. A compositionally biased stretch (low complexity) spans 475 to 493; that stretch reads HGPGQRPSSGSASASGSPS. Thr520 carries the post-translational modification Phosphothreonine. At Ser523 the chain carries Phosphoserine. Residue Thr527 is modified to Phosphothreonine. Tyr540 carries the post-translational modification Phosphotyrosine; by INSR. The YXXM motif 1 motif lies at 540–543; the sequence is YGYM. Ser560 is subject to Phosphoserine; by PLK1. The residue at position 577 (Ser577) is a Phosphoserine. Phosphothreonine occurs at positions 579 and 580. Ser594 carries the post-translational modification Phosphoserine. Positions 598 to 601 match the YXXM motif 2 motif; sequence YTLM. Phosphoserine is present on residues Ser608 and Ser620. A phosphotyrosine; by INSR mark is found at Tyr653 and Tyr675. 2 consecutive short sequence motifs (YXXM motif) follow at residues 653-656 and 675-678; these read YMPM. 2 positions are modified to phosphoserine: Ser679 and Ser682. Residues 703 to 719 show a composition bias toward low complexity; it reads PSAGPAGPAPTSAAGRT. The disordered stretch occupies residues 703–739; that stretch reads PSAGPAGPAPTSAAGRTFPASGGGYKASSPAESSPED. 2 positions are modified to phosphoserine: Ser735 and Ser736. The short motif at 742-745 is the YXXM motif 5 element; that stretch reads YMRM. Ser770 bears the Phosphoserine mark. Residue Thr779 is modified to Phosphothreonine. Residue Ser805 is modified to Phosphoserine. The YXXM motif 6 signature appears at 823–826; it reads YVLM. Ser828 is subject to Phosphoserine. Positions 840-1101 are disordered; the sequence is EPQATPGPSQ…KPEAARVASP (262 aa). Residues 859 to 870 are compositionally biased toward pro residues; sequence TQPPHPVVPSPV. Phosphoserine is present on Ser915. The residue at position 919 (Tyr919) is a Phosphotyrosine; by INSR. Residues 938 to 967 are compositionally biased toward low complexity; sequence LLASAASSSSLLSASSPASSLGSGTPGTSS. Ser973 is subject to Phosphoserine. Phosphotyrosine; by INSR is present on Tyr978. Residues 1013-1022 are compositionally biased toward pro residues; the sequence is PYPPLPPRPS. Residues 1072-1075 carry the YXXM motif 7 motif; the sequence is YTEM. Residue Thr1082 is modified to Phosphothreonine. The segment covering 1083-1093 has biased composition (pro residues); sequence PPQPIAAPPKP. Ser1100 is modified (phosphoserine). Ser1109 is modified (phosphoserine; by PLK1). Positions 1121 to 1296 are disordered; sequence LQASQPPDPH…TRSLGGLISA (176 aa). A compositionally biased stretch (low complexity) spans 1150–1165; that stretch reads ETFSSTTTVTPVSPSF. Thr1159 is subject to Phosphothreonine. 4 positions are modified to phosphoserine: Ser1162, Ser1174, Ser1176, and Ser1186. Positions 1174–1183 are enriched in polar residues; the sequence is SASVENVSLR. The span at 1188–1198 shows a compositional bias: gly residues; sequence GGVGVGPGGGD. A Phosphoserine modification is found at Ser1203. The span at 1224-1236 shows a compositional bias: gly residues; it reads QPGGLVGCPGSGG. Tyr1253 bears the Phosphotyrosine; by INSR mark. Positions 1263-1277 are enriched in pro residues; the sequence is GLPPQPQPPPPPLPQ. A Glycyl lysine isopeptide (Lys-Gly) (interchain with G-Cter in ubiquitin) cross-link involves residue Lys1331.

As to quaternary structure, interacts with PHIP. Interacts with SH2B1; this interaction enhances leptin-induced activation of the PI3-kinase pathway. Interacts with GRB2. Interacts with PIK3R1. Interacts with DVL2; this interaction promotes the Wnt/beta-catenin signaling pathway. In terms of processing, phosphorylation fluctuates in a cell-cycle dependent manner with hyperphosphorylation during mitosis. Phosphorylated at Ser-560 and Ser-1109 by PLK1; these phosphorylations prevent the activation of the PI3K pathway upon growth factor stimulation by inhibiting the binding between IRS2 and the PI3K pathway components and increasing the level of IRS2 protein degradation. In addition, they prevent premature mitotic exit. Post-translationally, monoubiquitinated by NEDD4; leading to enhanced IGF1 signaling. During cell cycle, ubiquitination and proteasomal degradation are controlled by FZR1.

It localises to the cytoplasm. The protein localises to the cytosol. Functionally, signaling adapter protein that participates in the signal transduction from two prominent receptor tyrosine kinases, insulin receptor/INSR and insulin-like growth factor I receptor/IGF1R. Plays therefore an important role in development, growth, glucose homeostasis as well as lipid metabolism. Upon phosphorylation by the insulin receptor, functions as a signaling scaffold that propagates insulin action through binding to SH2 domain-containing proteins including the p85 regulatory subunit of PI3K, NCK1, NCK2, GRB2 or SHP2. Recruitment of GRB2 leads to the activation of the guanine nucleotide exchange factor SOS1 which in turn triggers the Ras/Raf/MEK/MAPK signaling cascade. Activation of the PI3K/AKT pathway is responsible for most of insulin metabolic effects in the cell, and the Ras/Raf/MEK/MAPK is involved in the regulation of gene expression and in cooperation with the PI3K pathway regulates cell growth and differentiation. Acts a positive regulator of the Wnt/beta-catenin signaling pathway through suppression of DVL2 autophagy-mediated degradation leading to cell proliferation. Plays a role in cell cycle progression by promoting a robust spindle assembly checkpoint (SAC) during M-phase. In macrophages, IL4-induced tyrosine phosphorylation of IRS2 leads to the recruitment and activation of phosphoinositide 3-kinase (PI3K). The polypeptide is Insulin receptor substrate 2 (IRS2) (Homo sapiens (Human)).